The sequence spans 152 residues: Transcriptional regulator MraZ (152 aa).

SpoVT-AbrB domains are found at residues 5-52 and 81-124; these read ATLV…PLPE and ASEC…DETT.

This sequence belongs to the MraZ family. As to quaternary structure, forms oligomers.

The protein resides in the cytoplasm. It is found in the nucleoid. Negatively regulates its own expression and that of the subsequent genes in the proximal part of the division and cell wall (dcw) gene cluster. Acts by binding directly to DNA. May also regulate the expression of genes outside the dcw cluster. In Escherichia fergusonii (strain ATCC 35469 / DSM 13698 / CCUG 18766 / IAM 14443 / JCM 21226 / LMG 7866 / NBRC 102419 / NCTC 12128 / CDC 0568-73), this protein is Transcriptional regulator MraZ.